A 101-amino-acid chain; its full sequence is MKRRSHSVNLGKTKHKPEETCQAFEDISKYFSKEEWKKLSRSEKITYVYMKRNYTTMTNLGLRAHLPDFMESKERVTKSVLSDSDEVSSHESQDKRKNPVV.

One can recognise a KRAB-related domain in the interval 19–83 (ETCQAFEDIS…ERVTKSVLSD (65 aa)). The segment at 73–101 (KERVTKSVLSDSDEVSSHESQDKRKNPVV) is disordered. Residues 87–101 (VSSHESQDKRKNPVV) show a composition bias toward basic and acidic residues.

Belongs to the SSX family. As to expression, specifically expressed in testis (at protein level). Not detected in other tissues tested (at protein level).

The protein localises to the nucleus. Functionally, could act as a modulator of transcription. This chain is Protein SSXA1, found in Mus musculus (Mouse).